The sequence spans 534 residues: MTRQCPPQESGAALSGSVLAEAAVVFAVVLSIHAAVWDRYSWCAVALAVQAFYVQYKWDRLLQQGNAVFQFRMSANSGLLPASMVMPLLGLVMKERCQTAGNPYFERFGIVVAATGMAVALFSSVLALGITRPVPTNTCAISGLAGGVIIYIMRHSLSVGEVIEVLEVLLIFVYLNMILLYLLPRCFTPGEALLVLGGISFVLNQLIKRSLTESQGDPVDFFLLVVVVGMVLMGVFFSTLFVFMDSGTWASSIFFHLMTCVLGLGVVLPWLHWLIRRNPLLWLLQFLFYTETRIYLLAYWSLLASVACLVVLYQNAKRSSSESKKHRAPTITRKYFHFIVVATYIPGIIFDRPLLYVAATVCLAVFIFLEYVRYFRIKPLGHTLRSLLSLFLDERDSGPLILTHIYLLLGMSLPIWLIPRPCTQKDSLEGARALVPYAGVLAVGVGDTVASIFGSTMGEIRWPGTKKTFEGTMTSIFAQIISVALILIFDSGVDLNYSYAWILGSISTVSLLEAYTTQIDNLLLPLYLLILLMA.

Residues 1 to 16 (MTRQCPPQESGAALSG) lie on the Cytoplasmic side of the membrane. Residues 17-37 (SVLAEAAVVFAVVLSIHAAVW) form a helical membrane-spanning segment. Residues 38-72 (DRYSWCAVALAVQAFYVQYKWDRLLQQGNAVFQFR) lie on the Extracellular side of the membrane. The helical transmembrane segment at 73–93 (MSANSGLLPASMVMPLLGLVM) threads the bilayer. Over 94–109 (KERCQTAGNPYFERFG) the chain is Cytoplasmic. The chain crosses the membrane as a helical span at residues 110–130 (IVVAATGMAVALFSSVLALGI). At 131–132 (TR) the chain is on the extracellular side. A helical transmembrane segment spans residues 133–153 (PVPTNTCAISGLAGGVIIYIM). Residues 154 to 161 (RHSLSVGE) are Cytoplasmic-facing. A helical transmembrane segment spans residues 162 to 182 (VIEVLEVLLIFVYLNMILLYL). The Extracellular portion of the chain corresponds to 183 to 186 (LPRC). The helical transmembrane segment at 187–207 (FTPGEALLVLGGISFVLNQLI) threads the bilayer. The Cytoplasmic segment spans residues 208 to 220 (KRSLTESQGDPVD). A helical membrane pass occupies residues 221–241 (FFLLVVVVGMVLMGVFFSTLF). Residues 242 to 252 (VFMDSGTWASS) lie on the Extracellular side of the membrane. The chain crosses the membrane as a helical span at residues 253-273 (IFFHLMTCVLGLGVVLPWLHW). The Cytoplasmic segment spans residues 274–293 (LIRRNPLLWLLQFLFYTETR). The helical transmembrane segment at 294-314 (IYLLAYWSLLASVACLVVLYQ) threads the bilayer. Residues 315–333 (NAKRSSSESKKHRAPTITR) lie on the Extracellular side of the membrane. A helical transmembrane segment spans residues 334–350 (KYFHFIVVATYIPGIIF). Over 351 to 355 (DRPLL) the chain is Cytoplasmic. The chain crosses the membrane as a helical span at residues 356-376 (YVAATVCLAVFIFLEYVRYFR). Topologically, residues 377-397 (IKPLGHTLRSLLSLFLDERDS) are extracellular. A helical membrane pass occupies residues 398–418 (GPLILTHIYLLLGMSLPIWLI). Residues 419–432 (PRPCTQKDSLEGAR) lie on the Cytoplasmic side of the membrane. A helical transmembrane segment spans residues 433–453 (ALVPYAGVLAVGVGDTVASIF). The Extracellular portion of the chain corresponds to 454–468 (GSTMGEIRWPGTKKT). The interval 455-470 (STMGEIRWPGTKKTFE) is CTP-binding. Residues 469 to 489 (FEGTMTSIFAQIISVALILIF) traverse the membrane as a helical segment. Residues 490 to 491 (DS) lie on the Cytoplasmic side of the membrane. Residues 492–512 (GVDLNYSYAWILGSISTVSLL) form a helical membrane-spanning segment. Residues 513–534 (EAYTTQIDNLLLPLYLLILLMA) lie on the Extracellular side of the membrane.

This sequence belongs to the polyprenol kinase family.

Its subcellular location is the endoplasmic reticulum membrane. It carries out the reaction a di-trans,poly-cis-dolichol + CTP = a di-trans,poly-cis-dolichyl phosphate + CDP + H(+). Its pathway is protein modification; protein glycosylation. Functionally, catalyzes CTP-mediated phosphorylation of dolichol, the terminal step in de novo dolichyl monophosphate (Dol-P) biosynthesis. Dol-P is a lipid carrier essential for the synthesis of N-linked and O-linked oligosaccharides and for GPI anchors. This Mus musculus (Mouse) protein is Dolichol kinase.